The sequence spans 156 residues: Arginine repressor (156 aa).

It belongs to the ArgR family.

It localises to the cytoplasm. The protein operates within amino-acid biosynthesis; L-arginine biosynthesis [regulation]. In terms of biological role, regulates arginine biosynthesis genes. The protein is Arginine repressor of Proteus mirabilis (strain HI4320).